We begin with the raw amino-acid sequence, 394 residues long: Envelope glycoprotein D (394 aa).

An N-terminal signal peptide occupies residues 1–25; that stretch reads MGGAAARLGAVILFVVIVGLHGVRG. The tract at residues 25 to 57 is interaction with TNFRSF14; the sequence is GKYALADASLKMADPNRFRGKDLPVPDRLTDPP. Over 26–339 the chain is Virion surface; that stretch reads KYALADASLK…PYHPPATPNN (314 aa). Position 64 (histidine 64) interacts with Zn(2+). 3 disulfide bridges follow: cysteine 91–cysteine 214, cysteine 131–cysteine 227, and cysteine 143–cysteine 152. N-linked (GlcNAc...) asparagine; by host glycans are attached at residues asparagine 119 and asparagine 146. Residue aspartate 240 participates in Zn(2+) binding. Residues 261–305 form a profusion region; the sequence is LKIAGWHGPKAPYTSTLLPPELSETPNATQPELAPEDPEDSALLE. The disordered stretch occupies residues 275–301; the sequence is STLLPPELSETPNATQPELAPEDPEDS. Asparagine 287 carries an N-linked (GlcNAc...) asparagine; by host glycan. A helical membrane pass occupies residues 340 to 364; it reads MGLIAGAVGGSLLAALVICGIVYWM. Residues 365-394 are Intravirion-facing; that stretch reads RRRTQKGPKRIRLPHIREDDQPSSHQPLFY. The segment at 374–394 is disordered; sequence RIRLPHIREDDQPSSHQPLFY.

Belongs to the herpesviridae glycoprotein D family. In terms of assembly, homodimer. Interacts with host receptor TNFRSF14. Interacts with host receptor NECTIN1. Interacts (via profusion domain) with gB; this interaction occurs in the absence of gH/gL. Interacts (via profusion domain) with gH/gL heterodimer; this interaction occurs in the absence of gB. Associates with the gB-gH/gL-gD complex. Interacts (via C-terminus) with UL11 tegument protein. Interacts with host RSAD2.

The protein localises to the virion membrane. The protein resides in the host Golgi apparatus. Its function is as follows. Envelope glycoprotein that binds to the host cell entry receptors NECTIN1, TNFRSF14/HVEM and 3-O-sulfated heparan sulfate, promoting the virus entry into host cells. May trigger fusion with host membrane, by recruiting the fusion machinery composed of gB and gH/gL. The protein is Envelope glycoprotein D (gD) of Homo sapiens (Human).